We begin with the raw amino-acid sequence, 159 residues long: LOB domain-containing protein 25 (159 aa).

An LOB domain is found at 38 to 139 (SPCAACKFLR…RELEETNADL (102 aa)).

The protein belongs to the LOB domain-containing protein family. Expressed in young shoots, roots, stems, leaves and flowers.

This chain is LOB domain-containing protein 25 (LBD25), found in Arabidopsis thaliana (Mouse-ear cress).